The primary structure comprises 156 residues: Protein-export protein SecB (156 aa).

This sequence belongs to the SecB family. As to quaternary structure, homotetramer, a dimer of dimers. One homotetramer interacts with 1 SecA dimer.

The protein localises to the cytoplasm. Its function is as follows. One of the proteins required for the normal export of preproteins out of the cell cytoplasm. It is a molecular chaperone that binds to a subset of precursor proteins, maintaining them in a translocation-competent state. It also specifically binds to its receptor SecA. The polypeptide is Protein-export protein SecB (Serratia proteamaculans (strain 568)).